Here is a 169-residue protein sequence, read N- to C-terminus: 3-hydroxyacyl-[acyl-carrier-protein] dehydratase FabZ (169 aa).

Residue His-74 is part of the active site.

It belongs to the thioester dehydratase family. FabZ subfamily.

The protein localises to the cytoplasm. The catalysed reaction is a (3R)-hydroxyacyl-[ACP] = a (2E)-enoyl-[ACP] + H2O. Involved in unsaturated fatty acids biosynthesis. Catalyzes the dehydration of short chain beta-hydroxyacyl-ACPs and long chain saturated and unsaturated beta-hydroxyacyl-ACPs. The sequence is that of 3-hydroxyacyl-[acyl-carrier-protein] dehydratase FabZ from Gluconobacter oxydans (strain 621H) (Gluconobacter suboxydans).